The primary structure comprises 159 residues: Endoribonuclease YbeY (159 aa).

Positions 126, 130, and 136 each coordinate Zn(2+).

It belongs to the endoribonuclease YbeY family. Requires Zn(2+) as cofactor.

It localises to the cytoplasm. Single strand-specific metallo-endoribonuclease involved in late-stage 70S ribosome quality control and in maturation of the 3' terminus of the 16S rRNA. In Thermodesulfovibrio yellowstonii (strain ATCC 51303 / DSM 11347 / YP87), this protein is Endoribonuclease YbeY.